Reading from the N-terminus, the 122-residue chain is Large ribosomal subunit protein bL12 (122 aa).

This sequence belongs to the bacterial ribosomal protein bL12 family. As to quaternary structure, homodimer. Part of the ribosomal stalk of the 50S ribosomal subunit. Forms a multimeric L10(L12)X complex, where L10 forms an elongated spine to which 2 to 4 L12 dimers bind in a sequential fashion. Binds GTP-bound translation factors.

Its function is as follows. Forms part of the ribosomal stalk which helps the ribosome interact with GTP-bound translation factors. Is thus essential for accurate translation. The chain is Large ribosomal subunit protein bL12 from Streptococcus thermophilus (strain ATCC BAA-491 / LMD-9).